We begin with the raw amino-acid sequence, 395 residues long: Tyrosine--tRNA ligase (395 aa).

A 'HIGH' region motif is present at residues 42–51 (PTAPDIHLGH). A 'KMSKS' region motif is present at residues 226-230 (KMSKS). ATP is bound at residue Lys229. The S4 RNA-binding domain occupies 334 to 394 (IAISNLLKDA…GKRKFARITL (61 aa)).

This sequence belongs to the class-I aminoacyl-tRNA synthetase family. TyrS type 2 subfamily. Homodimer.

The protein localises to the cytoplasm. It catalyses the reaction tRNA(Tyr) + L-tyrosine + ATP = L-tyrosyl-tRNA(Tyr) + AMP + diphosphate + H(+). Its function is as follows. Catalyzes the attachment of tyrosine to tRNA(Tyr) in a two-step reaction: tyrosine is first activated by ATP to form Tyr-AMP and then transferred to the acceptor end of tRNA(Tyr). This Photobacterium profundum (strain SS9) protein is Tyrosine--tRNA ligase.